The sequence spans 374 residues: Alanine racemase (374 aa).

Lys40 acts as the Proton acceptor; specific for D-alanine in catalysis. Lys40 is modified (N6-(pyridoxal phosphate)lysine). Arg136 lines the substrate pocket. The active-site Proton acceptor; specific for L-alanine is Tyr264. Residue Met311 coordinates substrate.

This sequence belongs to the alanine racemase family. It depends on pyridoxal 5'-phosphate as a cofactor.

The enzyme catalyses L-alanine = D-alanine. It functions in the pathway amino-acid biosynthesis; D-alanine biosynthesis; D-alanine from L-alanine: step 1/1. In terms of biological role, catalyzes the interconversion of L-alanine and D-alanine. May also act on other amino acids. The chain is Alanine racemase (alr) from Pediococcus pentosaceus (strain ATCC 25745 / CCUG 21536 / LMG 10740 / 183-1w).